The sequence spans 195 residues: Penicillin-binding protein activator LpoB (195 aa).

The N-terminal stretch at Met1 to Gly16 is a signal peptide. Cys17 carries the N-palmitoyl cysteine lipid modification. Cys17 carries the S-diacylglycerol cysteine lipid modification. Residues Ser19–Pro55 form a disordered region. Pro residues-rich tracts occupy residues Pro24 to Pro38 and Pro44 to Pro55.

It belongs to the LpoB family. In terms of assembly, interacts with PBP1b.

It localises to the cell outer membrane. In terms of biological role, regulator of peptidoglycan synthesis that is essential for the function of penicillin-binding protein 1B (PBP1b). The protein is Penicillin-binding protein activator LpoB of Serratia proteamaculans (strain 568).